The primary structure comprises 83 residues: Exodeoxyribonuclease 7 small subunit (83 aa).

Belongs to the XseB family. In terms of assembly, heterooligomer composed of large and small subunits.

Its subcellular location is the cytoplasm. It carries out the reaction Exonucleolytic cleavage in either 5'- to 3'- or 3'- to 5'-direction to yield nucleoside 5'-phosphates.. Its function is as follows. Bidirectionally degrades single-stranded DNA into large acid-insoluble oligonucleotides, which are then degraded further into small acid-soluble oligonucleotides. This chain is Exodeoxyribonuclease 7 small subunit, found in Moorella thermoacetica (strain ATCC 39073 / JCM 9320).